The primary structure comprises 82 residues: Protein C2 (82 aa).

The protein is Protein C2 (C2) of Sterkiella nova (Ciliate).